A 795-amino-acid polypeptide reads, in one-letter code: Phenylalanine--tRNA ligase beta subunit (795 aa).

The tRNA-binding domain maps to 39–148; it reads AGAFHGVVVG…ADAPLGTDIR (110 aa). Residues 401–476 form the B5 domain; sequence PARATIALRR…RVYGYNNIPN (76 aa). Mg(2+) is bound by residues aspartate 454, aspartate 460, glutamate 463, and glutamate 464. The 94-residue stretch at 701-794 folds into the FDX-ACB domain; the sequence is SRFPANRRDI…LKQRFQASLR (94 aa).

The protein belongs to the phenylalanyl-tRNA synthetase beta subunit family. Type 1 subfamily. As to quaternary structure, tetramer of two alpha and two beta subunits. The cofactor is Mg(2+).

Its subcellular location is the cytoplasm. The catalysed reaction is tRNA(Phe) + L-phenylalanine + ATP = L-phenylalanyl-tRNA(Phe) + AMP + diphosphate + H(+). The sequence is that of Phenylalanine--tRNA ligase beta subunit (pheT) from Dickeya dadantii (strain 3937) (Erwinia chrysanthemi (strain 3937)).